The primary structure comprises 34 residues: Ornithine carbamoyltransferase, catabolic (34 aa).

The protein belongs to the aspartate/ornithine carbamoyltransferase superfamily. OTCase family. As to quaternary structure, probably nonameric or dodecameric.

It is found in the cytoplasm. It carries out the reaction carbamoyl phosphate + L-ornithine = L-citrulline + phosphate + H(+). It functions in the pathway amino-acid degradation; L-arginine degradation via ADI pathway; carbamoyl phosphate from L-arginine: step 2/2. The protein is Ornithine carbamoyltransferase, catabolic (arcB) of Pseudomonas putida (Arthrobacter siderocapsulatus).